We begin with the raw amino-acid sequence, 427 residues long: Adenylosuccinate synthetase (427 aa).

GTP is bound by residues 12-18 and 40-42; these read GDEGKGK and GHT. The active-site Proton acceptor is the Asp-13. 2 residues coordinate Mg(2+): Asp-13 and Gly-40. IMP-binding positions include 13–16, 38–41, Thr-127, Arg-141, Gln-222, Thr-237, and Arg-301; these read DEGK and NAGH. Residue His-41 is the Proton donor of the active site. 297-303 contributes to the substrate binding site; that stretch reads VVTKRPR. Residues Arg-303, 329-331, and 411-413 contribute to the GTP site; these read SLD and AVG.

Belongs to the adenylosuccinate synthetase family. As to quaternary structure, homodimer. The cofactor is Mg(2+).

It localises to the cytoplasm. The enzyme catalyses IMP + L-aspartate + GTP = N(6)-(1,2-dicarboxyethyl)-AMP + GDP + phosphate + 2 H(+). The protein operates within purine metabolism; AMP biosynthesis via de novo pathway; AMP from IMP: step 1/2. In terms of biological role, plays an important role in the de novo pathway of purine nucleotide biosynthesis. Catalyzes the first committed step in the biosynthesis of AMP from IMP. The sequence is that of Adenylosuccinate synthetase from Leuconostoc mesenteroides subsp. mesenteroides (strain ATCC 8293 / DSM 20343 / BCRC 11652 / CCM 1803 / JCM 6124 / NCDO 523 / NBRC 100496 / NCIMB 8023 / NCTC 12954 / NRRL B-1118 / 37Y).